A 210-amino-acid chain; its full sequence is Large ribosomal subunit protein uL3 (210 aa).

Q151 is modified (N5-methylglutamine).

This sequence belongs to the universal ribosomal protein uL3 family. Part of the 50S ribosomal subunit. Forms a cluster with proteins L14 and L19. Methylated by PrmB.

Its function is as follows. One of the primary rRNA binding proteins, it binds directly near the 3'-end of the 23S rRNA, where it nucleates assembly of the 50S subunit. The chain is Large ribosomal subunit protein uL3 from Aeromonas hydrophila subsp. hydrophila (strain ATCC 7966 / DSM 30187 / BCRC 13018 / CCUG 14551 / JCM 1027 / KCTC 2358 / NCIMB 9240 / NCTC 8049).